The chain runs to 853 residues: Envelope glycoprotein gp160 (853 aa).

A signal peptide spans 1 to 31; it reads MRVRGIERNCQNLWKWGIMLLGILMTCSNAD. Residues 32–681 are Extracellular-facing; the sequence is NLWVTVYYGV…ITQWLWYIKI (650 aa). An intrachain disulfide couples C53 to C73. N-linked (GlcNAc...) asparagine; by host glycosylation is found at N87, N137, N144, N153, N157, N185, N188, N198, N235, N242, N263, N277, N290, and N296. Intrachain disulfides connect C118–C206, C125–C197, C130–C154, C219–C248, and C229–C240. The tract at residues 130-153 is V1; sequence CIDEVMENVTMKNNNVTEEIRMKN. Residues 154–197 form a V2 region; sequence CSFNITTVVRDKTKQVHALFYRLDIVPIDNDNSTNSTNYRLINC. Residues 297-329 form a V3 region; sequence CTRPYRNIRQRTSIGLGQALYTTKTRSIIGQAY. A disulfide bridge links C297 with C330. 3 N-linked (GlcNAc...) asparagine; by host glycosylation sites follow: N331, N338, and N353. Residues 362–372 are CD4-binding loop; sequence SSGGDPEITTH. 2 disulfides stabilise this stretch: C376/C442 and C383/C415. The V4 stretch occupies residues 383 to 415; sequence CNTSGLFNSTWDISKSEWANSTESDDKPITLQC. N384, N390, N402, N441, N445, N458, N459, and N462 each carry an N-linked (GlcNAc...) asparagine; by host glycan. V5 regions lie at residues 457-468 and 460-468; these read TNNSSNETFRPG and SSNETFRPG. A fusion peptide region spans residues 509 to 529; that stretch reads AIGLGAMFLGFLGAAGSTMGA. The interval 571 to 589 is immunosuppression; the sequence is KQLQARILAVERYLKDQQL. A disulfide bridge connects residues C595 and C601. N608, N613, N622, N634, and N671 each carry an N-linked (GlcNAc...) asparagine; by host glycan. A coiled-coil region spans residues 630 to 664; the sequence is REIDNYTGLIYRLIEESQTQQEKNEQELLELDKWA. Positions 659–680 are MPER; binding to GalCer; it reads ELDKWASLWNWFNITQWLWYIK. Residues 682-702 form a helical membrane-spanning segment; it reads FIMIVGGLIGLRIVFAVLSLV. At 703–853 the chain is on the cytoplasmic side; that stretch reads NRVRQGYSPL…IRQGLERLLL (151 aa). A YXXL motif; contains endocytosis signal motif is present at residues 709-712; the sequence is YSPL. Residues C761 and C834 are each lipidated (S-palmitoyl cysteine; by host). A Di-leucine internalization motif motif is present at residues 852–853; sequence LL.

This sequence belongs to the HIV-1 env protein family. As to quaternary structure, the mature envelope protein (Env) consists of a homotrimer of non-covalently associated gp120-gp41 heterodimers. The resulting complex protrudes from the virus surface as a spike. There seems to be as few as 10 spikes on the average virion. Interacts with host CD4, CCR5 and CXCR4. Gp120 also interacts with the C-type lectins CD209/DC-SIGN and CLEC4M/DC-SIGNR (collectively referred to as DC-SIGN(R)). Gp120 and gp41 interact with GalCer. Gp120 interacts with host ITGA4/ITGB7 complex; on CD4+ T-cells, this interaction results in rapid activation of integrin ITGAL/LFA-1, which facilitates efficient cell-to-cell spreading of HIV-1. Gp120 interacts with cell-associated heparan sulfate; this interaction increases virus infectivity on permissive cells and may be involved in infection of CD4- cells. In terms of assembly, the mature envelope protein (Env) consists of a homotrimer of non-covalently associated gp120-gp41 heterodimers. The resulting complex protrudes from the virus surface as a spike. There seems to be as few as 10 spikes on the average virion. Post-translationally, highly glycosylated by host. The high number of glycan on the protein is reffered to as 'glycan shield' because it contributes to hide protein sequence from adaptive immune system. Palmitoylation of the transmembrane protein and of Env polyprotein (prior to its proteolytic cleavage) is essential for their association with host cell membrane lipid rafts. Palmitoylation is therefore required for envelope trafficking to classical lipid rafts, but not for viral replication. In terms of processing, specific enzymatic cleavages in vivo yield mature proteins. Envelope glycoproteins are synthesized as an inactive precursor that is heavily N-glycosylated and processed likely by host cell furin in the Golgi to yield the mature SU and TM proteins. The cleavage site between SU and TM requires the minimal sequence [KR]-X-[KR]-R. About 2 of the 9 disulfide bonds of gp41 are reduced by P4HB/PDI, following binding to CD4 receptor.

It localises to the virion membrane. Its subcellular location is the host cell membrane. The protein resides in the host endosome membrane. Oligomerizes in the host endoplasmic reticulum into predominantly trimers. In a second time, gp160 transits in the host Golgi, where glycosylation is completed. The precursor is then proteolytically cleaved in the trans-Golgi and thereby activated by cellular furin or furin-like proteases to produce gp120 and gp41. Its function is as follows. Attaches the virus to the host lymphoid cell by binding to the primary receptor CD4. This interaction induces a structural rearrangement creating a high affinity binding site for a chemokine coreceptor like CXCR4 and/or CCR5. Acts as a ligand for CD209/DC-SIGN and CLEC4M/DC-SIGNR, which are respectively found on dendritic cells (DCs), and on endothelial cells of liver sinusoids and lymph node sinuses. These interactions allow capture of viral particles at mucosal surfaces by these cells and subsequent transmission to permissive cells. HIV subverts the migration properties of dendritic cells to gain access to CD4+ T-cells in lymph nodes. Virus transmission to permissive T-cells occurs either in trans (without DCs infection, through viral capture and transmission), or in cis (following DCs productive infection, through the usual CD4-gp120 interaction), thereby inducing a robust infection. In trans infection, bound virions remain infectious over days and it is proposed that they are not degraded, but protected in non-lysosomal acidic organelles within the DCs close to the cell membrane thus contributing to the viral infectious potential during DCs' migration from the periphery to the lymphoid tissues. On arrival at lymphoid tissues, intact virions recycle back to DCs' cell surface allowing virus transmission to CD4+ T-cells. In terms of biological role, acts as a class I viral fusion protein. Under the current model, the protein has at least 3 conformational states: pre-fusion native state, pre-hairpin intermediate state, and post-fusion hairpin state. During fusion of viral and target intracellular membranes, the coiled coil regions (heptad repeats) assume a trimer-of-hairpins structure, positioning the fusion peptide in close proximity to the C-terminal region of the ectodomain. The formation of this structure appears to drive apposition and subsequent fusion of viral and target cell membranes. Complete fusion occurs in host cell endosomes and is dynamin-dependent, however some lipid transfer might occur at the plasma membrane. The virus undergoes clathrin-dependent internalization long before endosomal fusion, thus minimizing the surface exposure of conserved viral epitopes during fusion and reducing the efficacy of inhibitors targeting these epitopes. Membranes fusion leads to delivery of the nucleocapsid into the cytoplasm. This is Envelope glycoprotein gp160 from Homo sapiens (Human).